The following is a 71-amino-acid chain: Protein SlyX homolog (71 aa).

Belongs to the SlyX family.

The polypeptide is Protein SlyX homolog (Rhodopseudomonas palustris (strain HaA2)).